Consider the following 757-residue polypeptide: MGRRARGRRFQQPPQPEGEEDASDGGRKRGQAGWEGGYPEIVKENKLFEHYYQELKIVPEGEWDQFMESLREPLPATLRITGYKSHAKEILHCLKNKYFKELEDLEVDGQKVEVPQPLSWYPEELAWHTNLSRKILRKSPLLAKFHQFLVSETESGNISRQEAVSMIPPLLLNVEPHHKILDMCAAPGSKTTQLIEMLHADMSVPFPEGFVIANDVDNKRCYLLVHQAKRLSSPCIMVVNHDASSIPRLTVDVDGRKEILFYDRILCDVPCSGDGTMRKNIDVWKKWTTLNSLQLHGLQLRIATRGAEQLAEGGRMVYSTCSLNPVEDEAVIAALLEKSEGALELADVSAELPGLKWMPGVSQWKVMTRDGQWFADWHEVPQGRHTQIRPTMFPPTDLEKLQAMHLERCLRILPHHQNTGGFFVAVLVKKAPMPWNKRQPKVQNKSAEAREPRVSSHVAATEGNPSDQSELESQMITGAGDSETAHNTENTESNEKKDGVCGPPPSKKMKLFGFKEDPFVFIPEDDPLFPPIEKFYALDPSFPRMNLLTRTTEGKKRQLYMVSKELRNVLLNNSEKMKVINTGIKVWCRNNSGEEFDCAFRLAQEGIYTLYPFINSRIITVSMEDVKTLLTQENPFFRKLSSEAYSQVKDLAKGSVVLKYEPDSANPDTLQCPIVLCGWRGKASIRTFVPKNERLHYLRMMGLEVLGEKKKEGVILTNENAASPEQPGDEDAKQTAQDPCVPDSVPGCDAAAAEPSR.

The disordered stretch occupies residues 1–35 (MGRRARGRRFQQPPQPEGEEDASDGGRKRGQAGWE). Serine 23 carries the phosphoserine modification. Lysine 46 is covalently cross-linked (Glycyl lysine isopeptide (Lys-Gly) (interchain with G-Cter in SUMO2)). A Phosphoserine; by AURKB modification is found at serine 139. Residues 184 to 190 (CAAPGSK), aspartate 215, aspartate 242, and aspartate 268 contribute to the S-adenosyl-L-methionine site. The active-site Nucleophile is cysteine 321. A disordered region spans residues 436–504 (NKRQPKVQNK…EKKDGVCGPP (69 aa)). Phosphoserine is present on residues serine 456 and serine 473. The segment covering 463 to 476 (GNPSDQSELESQMI) has biased composition (polar residues). Residues lysine 510 and lysine 515 each participate in a glycyl lysine isopeptide (Lys-Gly) (interchain with G-Cter in SUMO2) cross-link. Lysine 585 is subject to N6-acetyllysine; alternate. Lysine 585 carries the N6-malonyllysine; alternate modification. Lysine 585 participates in a covalent cross-link: Glycyl lysine isopeptide (Lys-Gly) (interchain with G-Cter in SUMO2); alternate. At serine 592 the chain carries Phosphoserine. Glycyl lysine isopeptide (Lys-Gly) (interchain with G-Cter in SUMO2) cross-links involve residues lysine 639, lysine 653, and lysine 659. The tract at residues 716-757 (LTNENAASPEQPGDEDAKQTAQDPCVPDSVPGCDAAAAEPSR) is disordered. Threonine 717 bears the Phosphothreonine mark. Serine 723 carries the phosphoserine modification.

The protein belongs to the class I-like SAM-binding methyltransferase superfamily. RsmB/NOP family. TRM4 subfamily. In terms of assembly, interacts with NPM1 and NCL during interphase; interaction is disrupted following phosphorylation at Ser-139. Post-translationally, phosphorylated at Ser-139 by AURKB during mitosis, leading to abolish methyltransferase activity and the interaction with NPM1. As to expression, ubiquitously expressed at low level. Up-regulated in tumors. Dynamically expressed during morphogenesis and in adult skin: in adult skin, expression is up-regulated in the bulge and hair germ as soon as the hair follicle enters its growing phase (anagen). During anagen, expressed at highest level in cells of the hair germ that give rise to the hair matrix.

The protein localises to the nucleus. It is found in the nucleolus. The protein resides in the cytoplasm. It localises to the mitochondrion. Its subcellular location is the cytoskeleton. The protein localises to the spindle. It is found in the secreted. The protein resides in the extracellular exosome. The catalysed reaction is cytidine(48) in tRNA + S-adenosyl-L-methionine = 5-methylcytidine(48) in tRNA + S-adenosyl-L-homocysteine + H(+). The enzyme catalyses cytidine(49) in tRNA + S-adenosyl-L-methionine = 5-methylcytidine(49) in tRNA + S-adenosyl-L-homocysteine + H(+). It catalyses the reaction cytidine(50) in tRNA + S-adenosyl-L-methionine = 5-methylcytidine(50) in tRNA + S-adenosyl-L-homocysteine + H(+). It carries out the reaction cytidine(34) in tRNA precursor + S-adenosyl-L-methionine = 5-methylcytidine(34) in tRNA precursor + S-adenosyl-L-homocysteine + H(+). The catalysed reaction is a cytidine in mRNA + S-adenosyl-L-methionine = a 5-methylcytidine in mRNA + S-adenosyl-L-homocysteine + H(+). Its activity is regulated as follows. Inhibited by magnesium ions. In terms of biological role, RNA cytosine C(5)-methyltransferase that methylates cytosine to 5-methylcytosine (m5C) in various RNAs, such as tRNAs, mRNAs and some long non-coding RNAs (lncRNAs). Involved in various processes, such as epidermal stem cell differentiation, testis differentiation and maternal to zygotic transition during early development: acts by increasing protein synthesis; cytosine C(5)-methylation promoting tRNA stability and preventing mRNA decay. Methylates cytosine to 5-methylcytosine (m5C) at positions 34 and 48 of intron-containing tRNA(Leu)(CAA) precursors, and at positions 48, 49 and 50 of tRNA(Gly)(GCC) precursors. tRNA methylation is required generation of RNA fragments derived from tRNAs (tRFs). Also mediates C(5)-methylation of mitochondrial tRNAs. Catalyzes cytosine C(5)-methylation of mRNAs, leading to stabilize them and prevent mRNA decay: mRNA stabilization involves YBX1 that specifically recognizes and binds m5C-modified transcripts. Cytosine C(5)-methylation of mRNAs also regulates mRNA export: methylated transcripts are specifically recognized by THOC4/ALYREF, which mediates mRNA nucleo-cytoplasmic shuttling. Also mediates cytosine C(5)-methylation of non-coding RNAs, such as vault RNAs (vtRNAs), promoting their processing into regulatory small RNAs. Cytosine C(5)-methylation of vtRNA VTRNA1.1 promotes its processing into small-vault RNA4 (svRNA4) and regulates epidermal differentiation. May act downstream of Myc to regulate epidermal cell growth and proliferation. Required for proper spindle assembly and chromosome segregation, independently of its methyltransferase activity. The chain is RNA cytosine C(5)-methyltransferase NSUN2 from Mus musculus (Mouse).